Here is a 149-residue protein sequence, read N- to C-terminus: Transcriptional repressor NrdR (149 aa).

The segment at 3-34 (CPFCSATDTKVIDSRLVSDGHQVRRRRQCLAC) is a zinc-finger region. An ATP-cone domain is found at 49 to 139 (PKVIKSNGNR…VYRSFEDIKE (91 aa)).

It belongs to the NrdR family. Requires Zn(2+) as cofactor.

In terms of biological role, negatively regulates transcription of bacterial ribonucleotide reductase nrd genes and operons by binding to NrdR-boxes. The sequence is that of Transcriptional repressor NrdR from Aliivibrio fischeri (strain ATCC 700601 / ES114) (Vibrio fischeri).